The chain runs to 29 residues: Cyclotide mobo-A (29 aa).

The segment at residues 1-29 is a cross-link (cyclopeptide (Gly-Asn)); it reads GFPTCGETCTLGTCNTPGCTCSWPICTRN. Intrachain disulfides connect Cys5/Cys19, Cys9/Cys21, and Cys14/Cys26.

Belongs to the cyclotide family. Moebius subfamily. This is a cyclic peptide.

Probably participates in a plant defense mechanism. This Melicytus obovatus (Hymenanthera obovata) protein is Cyclotide mobo-A.